Reading from the N-terminus, the 170-residue chain is MFRATAIIRADKVIDAVPAGHAVLERDERHLRRKAIVLEGGEKVLVDFAEPIVLEHGDRLVLDDGREIEIRAASEELYEIRGRDPLHIAELTWHIGNRHLAAQIESDRIFILRDHVIKAMLEGLGATVTDVTAIFSPLRGAYSGGHSHDDHDHHHGHHEHDHEHHHHHHD.

The interval 144–170 (GGHSHDDHDHHHGHHEHDHEHHHHHHD) is disordered. Residues 146 to 162 (HSHDDHDHHHGHHEHDH) are compositionally biased toward basic and acidic residues.

Belongs to the UreE family.

Its subcellular location is the cytoplasm. Involved in urease metallocenter assembly. Binds nickel. Probably functions as a nickel donor during metallocenter assembly. In Brucella anthropi (strain ATCC 49188 / DSM 6882 / CCUG 24695 / JCM 21032 / LMG 3331 / NBRC 15819 / NCTC 12168 / Alc 37) (Ochrobactrum anthropi), this protein is Urease accessory protein UreE.